We begin with the raw amino-acid sequence, 231 residues long: Large ribosomal subunit protein uL1 (231 aa).

It belongs to the universal ribosomal protein uL1 family. As to quaternary structure, part of the 50S ribosomal subunit.

In terms of biological role, binds directly to 23S rRNA. The L1 stalk is quite mobile in the ribosome, and is involved in E site tRNA release. Functionally, protein L1 is also a translational repressor protein, it controls the translation of the L11 operon by binding to its mRNA. The polypeptide is Large ribosomal subunit protein uL1 (Pseudomonas fluorescens (strain Pf0-1)).